We begin with the raw amino-acid sequence, 176 residues long: Ribosome maturation factor RimP (176 aa).

Residues 143 to 176 are disordered; it reads LKPQTAKKKGRQEETEDMTLELDAVSRAVPEAEI.

It belongs to the RimP family.

Its subcellular location is the cytoplasm. In terms of biological role, required for maturation of 30S ribosomal subunits. This is Ribosome maturation factor RimP from Chlorobium luteolum (strain DSM 273 / BCRC 81028 / 2530) (Pelodictyon luteolum).